The following is a 492-amino-acid chain: Cysteine--tRNA ligase (492 aa).

A Zn(2+)-binding site is contributed by cysteine 27. The 'HIGH' region signature appears at 29–39 (VTVYDLCHLGH). Cysteine 211, histidine 236, and glutamate 240 together coordinate Zn(2+). A 'KMSKS' region motif is present at residues 268 to 272 (KMSKS). Position 271 (lysine 271) interacts with ATP.

This sequence belongs to the class-I aminoacyl-tRNA synthetase family. Monomer. It depends on Zn(2+) as a cofactor.

It is found in the cytoplasm. The enzyme catalyses tRNA(Cys) + L-cysteine + ATP = L-cysteinyl-tRNA(Cys) + AMP + diphosphate. The sequence is that of Cysteine--tRNA ligase from Prochlorococcus marinus (strain MIT 9515).